Reading from the N-terminus, the 447-residue chain is UDP-glycosyltransferase 76B1 (447 aa).

UDP-alpha-D-glucose is bound by residues Ser-269, 327–328 (WA), 345–353 (HCGWNSTLE), and 367–370 (FGDQ).

This sequence belongs to the UDP-glycosyltransferase family. As to expression, expressed in roots, leaves, hydathodes, sepals and style.

Glycosylates the amino acid-related molecules isoleucic acid (2-hydroxy-3-methylpentanoic acid) and valic acid (2-hydroxy-3-methylbutyric acid). Acts as a negative regulator of salicylic acid (SA)-dependent plant defense in the absence of pathogens and promotes the jasmonate (JA) response. Negatively influences the onset of senescence. The protein is UDP-glycosyltransferase 76B1 of Arabidopsis thaliana (Mouse-ear cress).